Consider the following 289-residue polypeptide: uncharacterized protein (289 aa).

Residues 1–19 (MAKWLGAPLARGVSTATRA) form the signal peptide. Helical transmembrane passes span 90–110 (GLLA…GWGV) and 257–277 (AALS…LVFA).

It is found in the cell membrane. This is an uncharacterized protein from Mycobacterium tuberculosis (strain ATCC 25618 / H37Rv).